A 632-amino-acid polypeptide reads, in one-letter code: Putative acetyl-CoA decarbonylase/synthase complex subunit alpha-like (632 aa).

[Ni-4Fe-4S] cluster-binding residues include H200, H226, C263, C379, C408, and C438.

The protein belongs to the Ni-containing carbon monoxide dehydrogenase family.

In terms of biological role, part of the ACDS complex that catalyzes the reversible cleavage of acetyl-CoA, allowing autotrophic growth from CO(2). The alpha-epsilon subcomponent functions as a carbon monoxide dehydrogenase. The protein is Putative acetyl-CoA decarbonylase/synthase complex subunit alpha-like (cdhA2) of Methanopyrus kandleri (strain AV19 / DSM 6324 / JCM 9639 / NBRC 100938).